Consider the following 844-residue polypeptide: Leucine--tRNA ligase (844 aa).

The 'HIGH' region motif lies at 39 to 49; that stretch reads PYPSGRIHMGH. A 'KMSKS' region motif is present at residues 621–625; that stretch reads KMSKS. Position 624 (lysine 624) interacts with ATP.

The protein belongs to the class-I aminoacyl-tRNA synthetase family.

It is found in the cytoplasm. It carries out the reaction tRNA(Leu) + L-leucine + ATP = L-leucyl-tRNA(Leu) + AMP + diphosphate. This Paracoccus denitrificans (strain Pd 1222) protein is Leucine--tRNA ligase.